Reading from the N-terminus, the 562-residue chain is Dihydroxy-acid dehydratase (562 aa).

Mg(2+) is bound at residue Asp-80. Residue Cys-121 participates in [2Fe-2S] cluster binding. Asp-122 and Lys-123 together coordinate Mg(2+). The residue at position 123 (Lys-123) is an N6-carboxylysine. [2Fe-2S] cluster is bound at residue Cys-194. Residue Glu-446 participates in Mg(2+) binding. The active-site Proton acceptor is Ser-472.

Belongs to the IlvD/Edd family. Homodimer. It depends on [2Fe-2S] cluster as a cofactor. Mg(2+) is required as a cofactor.

It catalyses the reaction (2R)-2,3-dihydroxy-3-methylbutanoate = 3-methyl-2-oxobutanoate + H2O. The enzyme catalyses (2R,3R)-2,3-dihydroxy-3-methylpentanoate = (S)-3-methyl-2-oxopentanoate + H2O. The protein operates within amino-acid biosynthesis; L-isoleucine biosynthesis; L-isoleucine from 2-oxobutanoate: step 3/4. It participates in amino-acid biosynthesis; L-valine biosynthesis; L-valine from pyruvate: step 3/4. In terms of biological role, functions in the biosynthesis of branched-chain amino acids. Catalyzes the dehydration of (2R,3R)-2,3-dihydroxy-3-methylpentanoate (2,3-dihydroxy-3-methylvalerate) into 2-oxo-3-methylpentanoate (2-oxo-3-methylvalerate) and of (2R)-2,3-dihydroxy-3-methylbutanoate (2,3-dihydroxyisovalerate) into 2-oxo-3-methylbutanoate (2-oxoisovalerate), the penultimate precursor to L-isoleucine and L-valine, respectively. This chain is Dihydroxy-acid dehydratase, found in Staphylococcus aureus (strain bovine RF122 / ET3-1).